A 270-amino-acid polypeptide reads, in one-letter code: Formamidopyrimidine-DNA glycosylase (270 aa).

The active-site Schiff-base intermediate with DNA is proline 2. Glutamate 3 serves as the catalytic Proton donor. Lysine 58 acts as the Proton donor; for beta-elimination activity in catalysis. DNA is bound by residues histidine 90 and arginine 109. An FPG-type zinc finger spans residues 237-270; it reads KVYGKEGEQCECGHTIERYTLGGRSTFLCSSCQK. Residue arginine 260 is the Proton donor; for delta-elimination activity of the active site.

The protein belongs to the FPG family. As to quaternary structure, monomer. The cofactor is Zn(2+).

It carries out the reaction Hydrolysis of DNA containing ring-opened 7-methylguanine residues, releasing 2,6-diamino-4-hydroxy-5-(N-methyl)formamidopyrimidine.. The enzyme catalyses 2'-deoxyribonucleotide-(2'-deoxyribose 5'-phosphate)-2'-deoxyribonucleotide-DNA = a 3'-end 2'-deoxyribonucleotide-(2,3-dehydro-2,3-deoxyribose 5'-phosphate)-DNA + a 5'-end 5'-phospho-2'-deoxyribonucleoside-DNA + H(+). Functionally, involved in base excision repair of DNA damaged by oxidation or by mutagenic agents. Acts as a DNA glycosylase that recognizes and removes damaged bases. Has a preference for oxidized purines, such as 7,8-dihydro-8-oxoguanine (8-oxoG). Has AP (apurinic/apyrimidinic) lyase activity and introduces nicks in the DNA strand. Cleaves the DNA backbone by beta-delta elimination to generate a single-strand break at the site of the removed base with both 3'- and 5'-phosphates. In Zymomonas mobilis subsp. mobilis (strain ATCC 31821 / ZM4 / CP4), this protein is Formamidopyrimidine-DNA glycosylase (mutM).